Reading from the N-terminus, the 350-residue chain is Putative transport protein YdbI (350 aa).

Transmembrane regions (helical) follow at residues 18–38, 67–87, 145–165, 207–227, 229–249, 257–277, 289–309, and 311–331; these read IFVVLTGVLYLFKSMINLILL, VVITFLYMLLAVLLTVGGFVF, ISTFGLQVVMALILSMFFLFE, FIIALVNCILTFIALWIMHFP, LFGLSIMVFFLGLIPVAGVVI, IAYSTGGGMYVLYIVLVIFAI, LMSAKTELPIFFTFTVLIFSE, and FFGIWGLIIGIPIFVFLLDIL.

Belongs to the autoinducer-2 exporter (AI-2E) (TC 2.A.86) family.

Its subcellular location is the cell membrane. The sequence is that of Putative transport protein YdbI (ydbI) from Bacillus subtilis (strain 168).